Consider the following 293-residue polypeptide: Elongation factor Ts (293 aa).

An involved in Mg(2+) ion dislocation from EF-Tu region spans residues Thr-80–Val-83.

The protein belongs to the EF-Ts family.

The protein resides in the cytoplasm. Its function is as follows. Associates with the EF-Tu.GDP complex and induces the exchange of GDP to GTP. It remains bound to the aminoacyl-tRNA.EF-Tu.GTP complex up to the GTP hydrolysis stage on the ribosome. In Burkholderia ambifaria (strain MC40-6), this protein is Elongation factor Ts.